The chain runs to 76 residues: Conotoxin Bu28 (76 aa).

An N-terminal signal peptide occupies residues 1 to 24 (MTSVQSATCCCLLWLVLCVQLVTP). Residues 25-39 (DSPATAQLSRHLTAR) constitute a propeptide that is removed on maturation. Intrachain disulfides connect Cys-50/Cys-63 and Cys-54/Cys-65. Arg-69 carries the arginine amide modification. A propeptide spanning residues 71 to 76 (VVSSSI) is cleaved from the precursor.

This sequence belongs to the conotoxin J superfamily. As to expression, expressed by the venom duct.

The protein resides in the secreted. Functionally, highly inhibits both nicotinic acetylcholine receptors (neuronal (alpha-3/beta-4) and muscular (alpha-1/beta-1/epsilon/delta) subtypes) and the voltage-gated potassium channel Kv1.6/KCNA6 subtype. The polypeptide is Conotoxin Bu28 (Conus bullatus (Bubble cone)).